The chain runs to 281 residues: Ribosomal RNA large subunit methyltransferase J (281 aa).

S-adenosyl-L-methionine-binding positions include H19, H42, S101, E119, 144 to 145 (NG), and D165. Residue D165 is the Proton acceptor of the active site.

Belongs to the RlmJ family. Monomer.

It carries out the reaction adenosine(2030) in 23S rRNA + S-adenosyl-L-methionine = N(6)-methyladenosine(2030) in 23S rRNA + S-adenosyl-L-homocysteine + H(+). Functionally, specifically methylates the adenine in position 2030 of 23S rRNA. The sequence is that of Ribosomal RNA large subunit methyltransferase J from Haemophilus influenzae (strain ATCC 51907 / DSM 11121 / KW20 / Rd).